A 525-amino-acid polypeptide reads, in one-letter code: Probable alpha-galactosidase A (525 aa).

A signal peptide spans 1–17 (MHPSMTLLAILPPLVRA). Cysteines 40 and 72 form a disulfide. N-linked (GlcNAc...) asparagine glycosylation is found at asparagine 43, asparagine 81, and asparagine 117. Cysteines 120 and 150 form a disulfide. The active-site Nucleophile is aspartate 148. An N-linked (GlcNAc...) asparagine glycan is attached at asparagine 197. The Proton donor role is filled by aspartate 206. Positions 402–525 (PPDCPMVIPT…GLPSGVDIEA (124 aa)) constitute a Ricin B-type lectin domain. 2 cysteine pairs are disulfide-bonded: cysteine 422/cysteine 434 and cysteine 459/cysteine 472.

Belongs to the glycosyl hydrolase 27 family.

It localises to the secreted. It catalyses the reaction Hydrolysis of terminal, non-reducing alpha-D-galactose residues in alpha-D-galactosides, including galactose oligosaccharides, galactomannans and galactolipids.. Functionally, hydrolyzes a variety of simple alpha-D-galactoside as well as more complex molecules such as oligosaccharides and polysaccharides. This chain is Probable alpha-galactosidase A (aglA), found in Aspergillus clavatus (strain ATCC 1007 / CBS 513.65 / DSM 816 / NCTC 3887 / NRRL 1 / QM 1276 / 107).